The chain runs to 236 residues: Methylosome subunit pICln (236 aa).

Positions 1 to 20 (MSFLKSFPPPGPTEGLRHQQ) are disordered. Ser2 is subject to N-acetylserine. Phosphoserine occurs at positions 101, 143, 192, 194, 197, and 209. The residue at position 222 (Thr222) is a Phosphothreonine.

The protein belongs to the pICln (TC 1.A.47) family. In terms of assembly, component of the methylosome, a 20S complex containing at least PRMT5/SKB1, WDR77/MEP50 and CLNS1A/pICln. May mediate SNRPD1 and SNRPD3 methylation. Forms a 6S pICln-Sm complex composed of CLNS1A/pICln, SNRPD1, SNRPD2, SNRPE, SNRPF and SNRPG; ring-like structure where CLNS1A/pICln mimics additional Sm proteins and which is unable to assemble into the core snRNP. Interacts with LSM10 and LSM11. As to expression, widely distributed but expressed more abundantly in nonpigmented ciliary epithelial cells than in pigmented ones.

It is found in the cytoplasm. The protein resides in the cytosol. The protein localises to the nucleus. It localises to the cytoskeleton. Involved in both the assembly of spliceosomal snRNPs and the methylation of Sm proteins. Chaperone that regulates the assembly of spliceosomal U1, U2, U4 and U5 small nuclear ribonucleoproteins (snRNPs), the building blocks of the spliceosome, and thereby plays an important role in the splicing of cellular pre-mRNAs. Most spliceosomal snRNPs contain a common set of Sm proteins SNRPB, SNRPD1, SNRPD2, SNRPD3, SNRPE, SNRPF and SNRPG that assemble in a heptameric protein ring on the Sm site of the small nuclear RNA to form the core snRNP (Sm core). In the cytosol, the Sm proteins SNRPD1, SNRPD2, SNRPE, SNRPF and SNRPG are trapped in an inactive 6S pICln-Sm complex by the chaperone CLNS1A that controls the assembly of the core snRNP. Dissociation by the SMN complex of CLNS1A from the trapped Sm proteins and their transfer to an SMN-Sm complex triggers the assembly of core snRNPs and their transport to the nucleus. The polypeptide is Methylosome subunit pICln (CLNS1A) (Oryctolagus cuniculus (Rabbit)).